The sequence spans 315 residues: GTPase Era (315 aa).

Residues 21 to 190 (RSGFVAIVGR…QSALEARLDP (170 aa)) enclose the Era-type G domain. Positions 29 to 36 (GRPNVGKS) are G1. 29–36 (GRPNVGKS) is a binding site for GTP. Positions 55-59 (QTTRN) are G2. Positions 76–79 (DTPG) are G3. GTP-binding positions include 76–80 (DTPGI) and 138–141 (NKQD). The tract at residues 138 to 141 (NKQD) is G4. The G5 stretch occupies residues 169-171 (FSA). Residues 221-297 (TRQEVPHSVA…YLKLFVKVEP (77 aa)) enclose the KH type-2 domain.

Belongs to the TRAFAC class TrmE-Era-EngA-EngB-Septin-like GTPase superfamily. Era GTPase family. As to quaternary structure, monomer.

Its subcellular location is the cytoplasm. The protein localises to the cell inner membrane. An essential GTPase that binds both GDP and GTP, with rapid nucleotide exchange. Plays a role in 16S rRNA processing and 30S ribosomal subunit biogenesis and possibly also in cell cycle regulation and energy metabolism. This chain is GTPase Era, found in Synechocystis sp. (strain ATCC 27184 / PCC 6803 / Kazusa).